The primary structure comprises 373 residues: Probable dual-specificity RNA methyltransferase RlmN (373 aa).

Residue E111 is the Proton acceptor of the active site. The 240-residue stretch at G117–H356 folds into the Radical SAM core domain. A disulfide bond links C124 and C359. [4Fe-4S] cluster-binding residues include C131, C135, and C138. Residues G183–E184, S216, S239–H241, and N316 contribute to the S-adenosyl-L-methionine site. Residue C359 is the S-methylcysteine intermediate of the active site.

It belongs to the radical SAM superfamily. RlmN family. The cofactor is [4Fe-4S] cluster.

It is found in the cytoplasm. It catalyses the reaction adenosine(2503) in 23S rRNA + 2 reduced [2Fe-2S]-[ferredoxin] + 2 S-adenosyl-L-methionine = 2-methyladenosine(2503) in 23S rRNA + 5'-deoxyadenosine + L-methionine + 2 oxidized [2Fe-2S]-[ferredoxin] + S-adenosyl-L-homocysteine. The catalysed reaction is adenosine(37) in tRNA + 2 reduced [2Fe-2S]-[ferredoxin] + 2 S-adenosyl-L-methionine = 2-methyladenosine(37) in tRNA + 5'-deoxyadenosine + L-methionine + 2 oxidized [2Fe-2S]-[ferredoxin] + S-adenosyl-L-homocysteine. Functionally, specifically methylates position 2 of adenine 2503 in 23S rRNA and position 2 of adenine 37 in tRNAs. The chain is Probable dual-specificity RNA methyltransferase RlmN from Chlorobium phaeovibrioides (strain DSM 265 / 1930) (Prosthecochloris vibrioformis (strain DSM 265)).